Reading from the N-terminus, the 259-residue chain is Thiazole synthase (259 aa).

K98 (schiff-base intermediate with DXP) is an active-site residue. Residues G159, 185-186 (AG), and 207-208 (NS) each bind 1-deoxy-D-xylulose 5-phosphate.

This sequence belongs to the ThiG family. In terms of assembly, homotetramer. Forms heterodimers with either ThiH or ThiS.

The protein localises to the cytoplasm. The catalysed reaction is [ThiS sulfur-carrier protein]-C-terminal-Gly-aminoethanethioate + 2-iminoacetate + 1-deoxy-D-xylulose 5-phosphate = [ThiS sulfur-carrier protein]-C-terminal Gly-Gly + 2-[(2R,5Z)-2-carboxy-4-methylthiazol-5(2H)-ylidene]ethyl phosphate + 2 H2O + H(+). It participates in cofactor biosynthesis; thiamine diphosphate biosynthesis. Functionally, catalyzes the rearrangement of 1-deoxy-D-xylulose 5-phosphate (DXP) to produce the thiazole phosphate moiety of thiamine. Sulfur is provided by the thiocarboxylate moiety of the carrier protein ThiS. In vitro, sulfur can be provided by H(2)S. The polypeptide is Thiazole synthase (Chlorobium phaeobacteroides (strain DSM 266 / SMG 266 / 2430)).